The sequence spans 297 residues: Formylmethanofuran--tetrahydromethanopterin formyltransferase (297 aa).

The protein belongs to the FTR family. Homotetramer.

Its subcellular location is the cytoplasm. The catalysed reaction is N-formylmethanofuran + 5,6,7,8-tetrahydromethanopterin + H(+) = N(5)-formyl-5,6,7,8-tetrahydromethanopterin + methanofuran. It functions in the pathway one-carbon metabolism; methanogenesis from CO(2); 5,10-methenyl-5,6,7,8-tetrahydromethanopterin from CO(2): step 2/3. Its function is as follows. Catalyzes the reversible transfer of a formyl group from formylmethanofuran (formyl-MFR) to tetrahydromethanopterin (H(4)MPT) to produce 5-formyl tetrahydromethanopterin (5-formyl-H(4)MPT) and methanofuran (MFR). In Methanothermobacter thermautotrophicus (strain ATCC 29096 / DSM 1053 / JCM 10044 / NBRC 100330 / Delta H) (Methanobacterium thermoautotrophicum), this protein is Formylmethanofuran--tetrahydromethanopterin formyltransferase.